The sequence spans 263 residues: Acetylglutamate kinase (263 aa).

Substrate contacts are provided by residues 48–49, Arg-70, and Asn-162; that span reads GG.

It belongs to the acetylglutamate kinase family. ArgB subfamily.

The protein localises to the cytoplasm. The enzyme catalyses N-acetyl-L-glutamate + ATP = N-acetyl-L-glutamyl 5-phosphate + ADP. It functions in the pathway amino-acid biosynthesis; L-arginine biosynthesis; N(2)-acetyl-L-ornithine from L-glutamate: step 2/4. Its function is as follows. Catalyzes the ATP-dependent phosphorylation of N-acetyl-L-glutamate. In Shewanella sediminis (strain HAW-EB3), this protein is Acetylglutamate kinase.